The primary structure comprises 1774 residues: MSSLKEQLAQVAASNATVALDRKRRQKLHSASLIYNPKTAATQDYDFIFDNATSALEELVEIDVRFKVFSRSLFSASSVNIDRNTQTKEQVRTLDQAVNAYLMLASAWWHLTPTLHATEWLVRRFQIHVHNAEMLLLSTLNYYQSPVFKRILNIVKLPPLFSSLANFAKAESVPSNLTIVKLFNDMDFLTLYTSYVGKVVKQKVTYTNQLLFNSCAFINLVAFNSNSEEKLERLVPILLEVCAKLLASPSDDCQMAAHTVLVVLVTALPLKKQILLAATETILANLADSASTKRCAFVTVCKLFQTLKGHGNVDQLPANIYTLFDSKISNDCLIDFLSKKETPADKFVTSYVRSIARYDHGKLNSIVSILKQVKLEKFEVRLIITDLIHLSELLEDKSQLIQLFEFFISIDEDMVLRCLHSLNLTGELFEIRLTTSLFSAERIEPVNGEDVVKGLEASKVAGLAGGAQPFTEFLNKNSAYICTKNISLLVEDDEQASKLLSLFVESVGKKYQPGLFLSSFFTTLESRITFLLRIIVSPGAPVALRLISVSNLSKLIHTIGNDTNVFTLVPVLIVALTDISKNVRAAVKKVLHQISKRPFTKRYFLNDKIYGEGQSVPMLNPKESESWLKTFLDGYLVENYDISQLLIPKKNEKMYLLFWANQALYMPLPQPKLVLMRFLARHESFSSTYSQLWENFLSSYLEQRPQWELKCSKNKTNFCEFESVLVLLLSKKEKNPAAIEFLLGALKSPFEQLASIMAKRLIEIYPTLKQPVQCQIVQDIIESTASADLSYDSIETLQSLALSADVVVSVIKQNMINVDETSNIIKKRRRRSSASNKAALQKEEVSRIAEIHLRKLTILLEALDKIKVQGSEALLTSLFDILADLDTLDNDGGLPVLYAQETLASCMLHTIDSLRATGATPKLRSVRTDILVAAIRASSSPQVQNKLLLVISALALLNPELVLHSIMPIFTFMGAHSLRQDDEFSTMVVEKTVKTVVPALLESGSSSMTDEIEFLLMSFSTAFSHVPKHRRVRLFTTLIKTLQPSSSIAPFLFLLSQQFSAKVENFEIAESKSILEFSRSFMSKFAVLDQLTGIAGLFELVKLLSEPDLKDKTSPRTLLSNGILNYTPSEMFNYKRNTFDFMDKILAEDNQGGNKGENNLKLKLLSALLDPQTEEQVKSDVKDQFAKVLQHNLVFINNVEELCSTQDLTEQGKSDGDESGSEPDNDNPVADMTEILFSLLGHILDLLPISTFVESILPLLGKDTEDIIRKHLTLVIGTKFESEPNSSATYANMTASSLLAIVTDEAEAPGVVQAALNTTSTLVSKFGDRLDASTLTECLKIGVQKLNSSSTDIVVSALAVLTNTVHVLGVKSIGFYAKIVPRALAIFDSVQDTKSDLRKEVQLSVVLLFAAMMKRIPSFLQSNLKDVMRAIFFADEVQNSISLYVISLLVQQLDLKEVLKTLYRIWTTDISKTGNSVAVSLFLTTLESTVEAIDKKSATSQSPTFFKLLLAMFEYRSVSTFDNNTISRIEASVHQIANIYVLKLNDKIFRPLFALTVRWAFDGESVSNLQITKVERLTAFFKFFNKLQESLKSIITSYFTYLLEPTNALLNDFHSGAVSDTNLRRLTLTALTASFKYDRDEYWKSTARFELLAESLVNQLANIEDSIGKYLVKAIAALASNNAGVDEHSKLLHRALVEHMKASCATSQKLWAVKATKLIYAKVGEHWLVLLPQLVPVIAELLEDDDEEVEQEVRTGLVKVVETVLGEPFDRYLT.

The segment at 1209–1228 (TEQGKSDGDESGSEPDNDNP) is disordered. One copy of the HEAT repeat lies at 1734-1772 (LVPVIAELLEDDDEEVEQEVRTGLVKVVETVLGEPFDRY).

The protein belongs to the HEATR1/UTP10 family. As to quaternary structure, component of the ribosomal small subunit (SSU) processome.

It localises to the nucleus. Its subcellular location is the nucleolus. In terms of biological role, involved in nucleolar processing of pre-18S ribosomal RNA. Involved in ribosome biosynthesis. In Eremothecium gossypii (strain ATCC 10895 / CBS 109.51 / FGSC 9923 / NRRL Y-1056) (Yeast), this protein is U3 small nucleolar RNA-associated protein 10.